Reading from the N-terminus, the 267-residue chain is LysM and putative peptidoglycan-binding domain-containing protein 4 (267 aa).

Residues 1-211 are Extracellular-facing; it reads MRRGDPPPRA…RSNGADWGIQ (211 aa). A disordered region spans residues 30–64; the sequence is HRQEEPEASSEDEELNVMELRPRSRDSSSKEKEGV. Over residues 35-45 the composition is skewed to acidic residues; it reads PEASSEDEELN. A compositionally biased stretch (basic and acidic residues) spans 49–64; sequence LRPRSRDSSSKEKEGV. Residues 70–114 form the LysM domain; sequence LERDISHEDNLSKLALQYGCKVADIKRVNNLFQEQDMYALKSIKI. Asparagine 79 is a glycosylation site (N-linked (GlcNAc...) asparagine). Residues 130 to 152 form a disordered region; the sequence is RTPQQRPSHDAAPSNSAMASVSG. Residues 142–152 show a composition bias toward polar residues; sequence PSNSAMASVSG. Residues 212-232 form a helical membrane-spanning segment; the sequence is WWNAVIAMLLIGIVLPIFYVV. Residues 233–267 lie on the Cytoplasmic side of the membrane; sequence YYKTKDSGESAVDNVGVNISVSTSNSTREYNGKSP.

It is found in the membrane. The polypeptide is LysM and putative peptidoglycan-binding domain-containing protein 4 (lysmd4) (Danio rerio (Zebrafish)).